The primary structure comprises 445 residues: Probable glycine dehydrogenase (decarboxylating) subunit 1 (445 aa).

The protein belongs to the GcvP family. N-terminal subunit subfamily. As to quaternary structure, the glycine cleavage system is composed of four proteins: P, T, L and H. In this organism, the P 'protein' is a heterodimer of two subunits.

The enzyme catalyses N(6)-[(R)-lipoyl]-L-lysyl-[glycine-cleavage complex H protein] + glycine + H(+) = N(6)-[(R)-S(8)-aminomethyldihydrolipoyl]-L-lysyl-[glycine-cleavage complex H protein] + CO2. The glycine cleavage system catalyzes the degradation of glycine. The P protein binds the alpha-amino group of glycine through its pyridoxal phosphate cofactor; CO(2) is released and the remaining methylamine moiety is then transferred to the lipoamide cofactor of the H protein. The sequence is that of Probable glycine dehydrogenase (decarboxylating) subunit 1 from Anaeromyxobacter dehalogenans (strain 2CP-C).